The following is a 334-amino-acid chain: N-acetyl-gamma-glutamyl-phosphate reductase (334 aa).

Cys-154 is a catalytic residue.

It belongs to the NAGSA dehydrogenase family. Type 1 subfamily.

Its subcellular location is the cytoplasm. It carries out the reaction N-acetyl-L-glutamate 5-semialdehyde + phosphate + NADP(+) = N-acetyl-L-glutamyl 5-phosphate + NADPH + H(+). It functions in the pathway amino-acid biosynthesis; L-arginine biosynthesis; N(2)-acetyl-L-ornithine from L-glutamate: step 3/4. Functionally, catalyzes the NADPH-dependent reduction of N-acetyl-5-glutamyl phosphate to yield N-acetyl-L-glutamate 5-semialdehyde. This is N-acetyl-gamma-glutamyl-phosphate reductase from Photorhabdus laumondii subsp. laumondii (strain DSM 15139 / CIP 105565 / TT01) (Photorhabdus luminescens subsp. laumondii).